A 257-amino-acid chain; its full sequence is MSAIRYGDNVFITLPRLSTPMIFNGLVPHYTKPNQYEYVPILSSGSIANGDSYIIEPININNSNTALNPQSVFRLKQVSQNKYLYDNNGIVYLGNDTDNKANWSLKPVNLNATTIDYNQEFRLVNQGTGNNAVFSTINNVTMITSKYNDTTNNSIFKFLKGPFTYAQSQCCQGNILYTRPNMCGIYKQGSSVCHTIPSSQSNYPSYTTSMVGSTQSTTPVGSNPPTHRSIDKWYIIGGIFWVIVLIILVIFIIWKLK.

N-linked (GlcNAc...) asparagine; by host glycosylation is found at Asn61, Asn95, Asn102, Asn111, Asn139, Asn148, and Asn152. Residues 233 to 253 (WYIIGGIFWVIVLIILVIFII) traverse the membrane as a helical segment.

Its subcellular location is the host membrane. The protein resides in the virion. This is an uncharacterized protein from Acanthamoeba polyphaga (Amoeba).